Reading from the N-terminus, the 465-residue chain is Gamma-aminobutyric acid receptor subunit rho-2 (465 aa).

The N-terminal stretch at Met-1 to Ser-20 is a signal peptide. At Arg-21–His-260 the chain is on the extracellular side. Position 105 (Arg-105) interacts with 4-aminobutanoate. N-linked (GlcNAc...) asparagine glycosylation occurs at Asn-120. Ser-169 is a 4-aminobutanoate binding site. Cys-178 and Cys-192 are joined by a disulfide. Glu-197 contributes to the 4-aminobutanoate binding site. An N-linked (GlcNAc...) asparagine glycan is attached at Asn-254. A helical transmembrane segment spans residues Ile-261–Val-281. Residues Ser-282–Arg-293 are Cytoplasmic-facing. Residues Val-294 to Ser-314 form a helical membrane-spanning segment. The Extracellular segment spans residues Met-315–Asp-325. The helical transmembrane segment at Ile-326–Asn-346 threads the bilayer. Over Tyr-347–Lys-443 the chain is Cytoplasmic. The chain crosses the membrane as a helical span at residues Tyr-444–Phe-464. Residue Ser-465 is a topological domain, extracellular.

The protein belongs to the ligand-gated ion channel (TC 1.A.9) family. Gamma-aminobutyric acid receptor (TC 1.A.9.5) subfamily. GABRR2 sub-subfamily. In terms of assembly, three rho subunits (rho-1/GBRR1, rho-2/GBRR2 and rho-3/GBRR3) coassemble either to form functional homopentamers or heteropentamers. Rho-2 is unable to form a functional homopentamer. Interacts with SQSTM1. As to expression, expressed in the cerebellum.

It localises to the postsynaptic cell membrane. Its subcellular location is the cell membrane. It carries out the reaction chloride(in) = chloride(out). Rho subunit of the pentameric ligand-gated chloride channels responsible for mediating the effects of gamma-aminobutyric acid (GABA), the major inhibitory neurotransmitter in the brain. Rho-containing GABA-gated chloride channels are a subclass of GABA(A) receptors (GABAARs) entirely composed of rho subunits, where GABA molecules bind at the rho intersubunit interfaces. When activated by GABA, rho-GABAARs selectively allow the flow of chloride anions across the cell membrane down their electrochemical gradient. Rho-2 GABAARs may contribute to the regulation of glial development in the cerebellum by controlling extrasynaptic transmission. Rho-2 GABAARs are also involved in neuronal tonic (extrasynaptic) and phasic (synaptic) transmission in the Purkinje neurons of the cerebellum. Rho-2 GABAARs expressed in retina may play a role in retinal neurotransmission. This is Gamma-aminobutyric acid receptor subunit rho-2 from Mus musculus (Mouse).